The primary structure comprises 92 residues: Conotoxin Im9.4 (92 aa).

An N-terminal signal peptide occupies residues 1–20 (MHRSLAGSAVLMLLLLFALG). The propeptide occupies 21-62 (NFVGVQPGLVTRDADNGQLMDNRRNLRLERKTMSLFKSLDKR). 3 cysteine pairs are disulfide-bonded: Cys-65/Cys-79, Cys-69/Cys-81, and Cys-75/Cys-87. Asn-90 is subject to Asparagine amide.

This sequence belongs to the conotoxin P superfamily. Expressed by the venom duct.

The protein resides in the secreted. Its function is as follows. Probable neurotoxin that inhibits ion channels. This is Conotoxin Im9.4 from Conus imperialis (Imperial cone).